We begin with the raw amino-acid sequence, 768 residues long: Cullin-3 (768 aa).

N-acetylserine is present on Ser-2. The segment at 2–41 is interaction with KLHL18; the sequence is SNLSKGTGSRKDTKMRIRAFPMTMDEKYVNSIWDLLKNAI. Ser-585 is modified (phosphoserine). The tract at residues 677–698 is disordered; that stretch reads VAAKQGESDPERKETRQKVDDD. Residues 682 to 698 show a composition bias toward basic and acidic residues; it reads GESDPERKETRQKVDDD. The Cullin neddylation domain maps to 698–760; that stretch reads DRKHEIEAAI…REYLARTPED (63 aa). Residue Lys-712 forms a Glycyl lysine isopeptide (Lys-Gly) (interchain with G-Cter in NEDD8) linkage.

The protein belongs to the cullin family. Forms neddylation-dependent homodimers. Component of multiple BCR (BTB-CUL3-RBX1) E3 ubiquitin-protein ligase complexes formed of CUL3, RBX1 and a variable BTB domain-containing protein acting as both, adapter to cullin and substrate recognition subunit. The BCR complex may be active as a heterodimeric complex, in which NEDD8, covalently attached to one CUL3 molecule, binds to the C-terminus of a second CUL3 molecule. Interacts with RBX1, RNF7, CYCE and TIP120A/CAND1. Part of the BCR(SPOP) containing SPOP, and of BCR containing homodimeric SPOPL or the heterodimer formed by SPOP and SPOPL. Part of the probable BCR(KLHL9-KLHL13) complex with BTB domain proteins KLHL9 and KLHL13. Part of the BCR(KLHL41) complex containing KLHL41. Component of the BCR(KLHL12) E3 ubiquitin ligase complex, at least composed of CUL3 and KLHL12 and RBX1. Component of the BCR(KLHL3) E3 ubiquitin ligase complex, at least composed of CUL3 and KLHL3 and RBX1. Part of the BCR(ENC1) complex containing ENC1. Part of a complex consisting of BMI1/PCGF4, CUL3 and SPOP. Part of a complex consisting of BRMS1, CUL3 and SPOP. Component of the BCR(KLHL21) E3 ubiquitin ligase complex, at least composed of CUL3, KLHL21 and RBX1. Component of the BCR(KLHL22) E3 ubiquitin ligase complex, at least composed of CUL3, KLHL22 and RBX1. Component of the BCR(KLHL25) E3 ubiquitin ligase complex, at least composed of CUL3, KLHL25 and RBX1. Part of a complex consisting of MACROH2A1, CUL3 and SPOP. Component of the BCR(KLHL42) E3 ubiquitin ligase complex, at least composed of CUL3 and KLHL42. Interacts with KLHL42 (via the BTB domain). Interacts with KATNA1; the interaction is enhanced by KLHL42. Component of the BCR(KBTBD8) E3 ubiquitin ligase complex, at least composed of CUL3, KBTBD8 and RBX1. Interacts with KCTD5, KLHL9, KLHL11, KLHL13, GAN, ZBTB16, KLHL3, KLHL15, KLHL20, KLHL36, GMCL2, BTBD1. Part of a complex that contains CUL3, RBX1 and GAN. Interacts (via BTB domain) with KLHL17; the interaction regulates surface GRIK2 expression. Interacts with KCTD7. Part of the BCR(GAN) complex containing GAN. Part of the BCR(KEAP1) complex containing KEAP1. Interacts with KLHL10. Interacts with KAT5 and ATF2. Interacts with KCTD17 in the BCR(KCTD17) E3 ubiquitin ligase complex, at least composed of CUL3, KCTD17 and RBX1. Interacts (when neddylated) with ARIH1; leading to activate the E3 ligase activity of ARIH1. Interacts with COPS9 isoform 2. Interacts with PPP2R5B; this interaction is indirect and mediated through KLHL15-binding and leads to PPP2R5B proteasomal degradation. Interacts with RBBP8/CtIP; this interaction is indirect and mediated through KLHL15-binding and leads to RBBP8 proteasomal degradation. Interacts with KLHL24 in the BCR(KLHL24) E3 ubiquitin ligase complex, composed of CUL3, RBX1 and KLHL24. Interacts with RHOBTB2. Interacts with AURKA and KLHL18 (via BTB domain). Interacts (unneddylated form) with DCUN1D1, DCUN1D2, DCUN1D3, DCUN1D4 and DCUN1D5; these interactions promote the cullin neddylation. Component of a BCR3 (BTB-CUL3-RBX1) E3 ubiquitin ligase complex, also named Cul3-RING ubiquitin ligase complex CUL3(KBTBD6/7), composed of CUL3, RBX1, KBTBD6 and KBTBD7. Component of the BCR(KBTBD2) E3 ubiquitin ligase complex, at least composed of CUL3, KBTBD2 and RBX1. Interacts with KBTBD2 (via the BTB domain). Component of the BCR(KBTBD4) E3 ubiquitin ligase complex, at least composed of CUL3, KBTBD4 and RBX1. Component of the BCR(ARMC5) E3 ubiquitin ligase complex, composed of CUL3, ARMC5 and RBX1. Neddylated. Attachment of NEDD8 is required for the E3 ubiquitin-protein ligase activity of the BCR complex. Deneddylated via its interaction with the COP9 signalosome (CSN) complex. Brain, spermatozoa, and testis (at protein level). Widely expressed.

It is found in the nucleus. It localises to the golgi apparatus. Its subcellular location is the cell projection. The protein localises to the cilium. The protein resides in the flagellum. It is found in the cytoplasm. It localises to the cytoskeleton. Its subcellular location is the spindle. The protein localises to the microtubule organizing center. The protein resides in the centrosome. It is found in the spindle pole. The protein operates within protein modification; protein ubiquitination. In terms of biological role, core component of multiple cullin-RING-based BCR (BTB-CUL3-RBX1) E3 ubiquitin-protein ligase complexes which mediate the ubiquitination and subsequent proteasomal degradation of target proteins. BCR complexes and ARIH1 collaborate in tandem to mediate ubiquitination of target proteins. As a scaffold protein may contribute to catalysis through positioning of the substrate and the ubiquitin-conjugating enzyme. The E3 ubiquitin-protein ligase activity of the complex is dependent on the neddylation of the cullin subunit and is inhibited by the association of the deneddylated cullin subunit with TIP120A/CAND1. The functional specificity of the BCR complex depends on the BTB domain-containing protein as the substrate recognition component. BCR(KLHL42) is involved in ubiquitination of KATNA1. BCR(SPOP) is involved in ubiquitination of BMI1/PCGF4, BRMS1, MACROH2A1 and DAXX, GLI2 and GLI3. Can also form a cullin-RING-based BCR (BTB-CUL3-RBX1) E3 ubiquitin-protein ligase complex containing homodimeric SPOPL or the heterodimer formed by SPOP and SPOPL; these complexes have lower ubiquitin ligase activity. BCR(KLHL9-KLHL13) controls the dynamic behavior of AURKB on mitotic chromosomes and thereby coordinates faithful mitotic progression and completion of cytokinesis. BCR(KLHL12) is involved in ER-Golgi transport by regulating the size of COPII coats, thereby playing a key role in collagen export, which is required for embryonic stem (ES) cells division: BCR(KLHL12) acts by mediating monoubiquitination of SEC31 (SEC31A or SEC31B). BCR(KLHL3) acts as a regulator of ion transport in the distal nephron; by mediating ubiquitination of WNK4. The BCR(KLHL20) E3 ubiquitin ligase complex is involved in interferon response and anterograde Golgi to endosome transport: it mediates both ubiquitination leading to degradation and 'Lys-33'-linked ubiquitination. The BCR(KLHL21) E3 ubiquitin ligase complex regulates localization of the chromosomal passenger complex (CPC) from chromosomes to the spindle midzone in anaphase and mediates the ubiquitination of AURKB. The BCR(KLHL22) ubiquitin ligase complex mediates monoubiquitination of PLK1, leading to PLK1 dissociation from phosphoreceptor proteins and subsequent removal from kinetochores, allowing silencing of the spindle assembly checkpoint (SAC) and chromosome segregation. The BCR(KLHL22) ubiquitin ligase complex is also responsible for the amino acid-stimulated 'Lys-48' polyubiquitination and proteasomal degradation of DEPDC5. Through the degradation of DEPDC5, releases the GATOR1 complex-mediated inhibition of the TORC1 pathway. The BCR(KLHL25) ubiquitin ligase complex is involved in translational homeostasis by mediating ubiquitination and subsequent degradation of hypophosphorylated EIF4EBP1 (4E-BP1). The BCR(KLHL25) ubiquitin ligase complex is also involved in lipid synthesis by mediating ubiquitination and degradation of ACLY. The BCR(KBTBD8) complex acts by mediating monoubiquitination of NOLC1 and TCOF1, leading to remodel the translational program of differentiating cells in favor of neural crest specification. Involved in ubiquitination of cyclin E and of cyclin D1 (in vitro) thus involved in regulation of G1/S transition. Involved in the ubiquitination of KEAP1, ENC1 and KLHL41. In concert with ATF2 and RBX1, promotes degradation of KAT5 thereby attenuating its ability to acetylate and activate ATM. The BCR(KCTD17) E3 ubiquitin ligase complex mediates ubiquitination and degradation of TCHP, a down-regulator of cilium assembly, thereby inducing ciliogenesis. The BCR(KLHL24) E3 ubiquitin ligase complex mediates ubiquitination of KRT14, controls KRT14 levels during keratinocytes differentiation, and is essential for skin integrity. The BCR(KLHL18) E3 ubiquitin ligase complex mediates the ubiquitination of AURKA leading to its activation at the centrosome which is required for initiating mitotic entry. The BCR(KEAP1) E3 ubiquitin ligase complex acts as a key sensor of oxidative and electrophilic stress by mediating ubiquitination and degradation of NFE2L2/NRF2, a transcription factor regulating expression of many cytoprotective genes. As part of the CUL3(KBTBD6/7) E3 ubiquitin ligase complex functions mediates 'Lys-48' ubiquitination and proteasomal degradation of TIAM1. By controlling the ubiquitination of that RAC1 guanine exchange factors (GEF), regulates RAC1 signal transduction and downstream biological processes including the organization of the cytoskeleton, cell migration and cell proliferation. The BCR(KBTBD4) E3 ubiquitin ligase complex targets CoREST corepressor complex components RCOR1, KDM1A/LSD1 and HDAC2 for proteasomal degradation with RCOR1 likely to be the primary target while degradation of KDM1A and HDAC2 is likely due to their association with RCOR1. It also targets RCOR3, MIER2 and MIER3 for proteasomal degradation as well as associated proteins ZNF217 and RREB1 with degradation being dependent on the presence of an ELM2 domain in the target proteins. The BCR(ARMC5) complex mediates premature transcription termination of transcripts that are unfavorably configured for transcriptional elongation by mediating ubiquitination of Pol II subunit POLR2A. Required for 'Lys-63'-linked ubiquitination of large ribosomal subunit protein MRPL12. In Homo sapiens (Human), this protein is Cullin-3.